We begin with the raw amino-acid sequence, 157 residues long: Endoribonuclease YbeY (157 aa).

3 residues coordinate Zn(2+): H122, H126, and H132.

This sequence belongs to the endoribonuclease YbeY family. Requires Zn(2+) as cofactor.

It localises to the cytoplasm. In terms of biological role, single strand-specific metallo-endoribonuclease involved in late-stage 70S ribosome quality control and in maturation of the 3' terminus of the 16S rRNA. The protein is Endoribonuclease YbeY of Bacillus subtilis (strain 168).